A 319-amino-acid polypeptide reads, in one-letter code: Ankyrin repeat domain-containing protein 1 (319 aa).

The stretch at 61 to 89 (KSEKQREAELKKKKLEQRSKLENLEDLEI) forms a coiled coil. ANK repeat units lie at residues 152-181 (YKRT…QIEF), 185-214 (LEST…KISA), 218-247 (LLST…DLNA), 251-280 (EGDT…DLNI), and 284-315 (AGKT…KTSR).

In terms of assembly, interacts with YBX1. Interacts with TTN/titin. As to expression, mainly expressed in activated vascular endothelial cells. To a lower extent, also expressed in hepatoma cells.

The protein localises to the nucleus. Functionally, may play an important role in endothelial cell activation. May act as a nuclear transcription factor that negatively regulates the expression of cardiac genes. Induction seems to be correlated with apoptotic cell death in hepatoma cells. This is Ankyrin repeat domain-containing protein 1 (ANKRD1) from Homo sapiens (Human).